Consider the following 156-residue polypeptide: Protein-export protein SecB (156 aa).

It belongs to the SecB family. As to quaternary structure, homotetramer, a dimer of dimers. One homotetramer interacts with 1 SecA dimer.

It localises to the cytoplasm. Functionally, one of the proteins required for the normal export of preproteins out of the cell cytoplasm. It is a molecular chaperone that binds to a subset of precursor proteins, maintaining them in a translocation-competent state. It also specifically binds to its receptor SecA. In Aliivibrio fischeri (strain ATCC 700601 / ES114) (Vibrio fischeri), this protein is Protein-export protein SecB.